The following is an 850-amino-acid chain: cAMP-inducible prespore protein D7 (850 aa).

The N-terminal stretch at 1–24 (MYSKKYTSFVIVLILSCIISTCTS) is a signal peptide. The span at 119–130 (QNNNIGSSIGDS) shows a compositional bias: low complexity. Disordered stretches follow at residues 119 to 167 (QNNN…SKTT) and 787 to 850 (DAEL…QNQK). The span at 131–143 (TGASTSPQFQSIN) shows a compositional bias: polar residues. Residues 144-154 (GLSGASQSSGS) show a composition bias toward low complexity. Basic and acidic residues predominate over residues 787 to 798 (DAELAKNNKQEN). Residues 801–820 (ENLVQEKQQSPDQIKNQLKN) show a composition bias toward polar residues. Residues 837–850 (EKNQQLLEQEQNQK) are compositionally biased toward low complexity.

The sequence is that of cAMP-inducible prespore protein D7 (D7) from Dictyostelium discoideum (Social amoeba).